The primary structure comprises 534 residues: Membrane protein insertase YidC (534 aa).

Transmembrane regions (helical) follow at residues 7 to 27 (IIAVVLSFIVLVGWGYLSEYM), 319 to 339 (AIDLGWFGFIARPLVTLLDFF), 342 to 362 (YVGNYGTAIILLTILIKLVFW), 413 to 433 (GGCLPMLVQIPVFFGLYQALL), and 493 to 513 (VMMFMPVVFTFLFLNFPSGLV).

This sequence belongs to the OXA1/ALB3/YidC family. Type 1 subfamily. Interacts with the Sec translocase complex via SecD. Specifically interacts with transmembrane segments of nascent integral membrane proteins during membrane integration.

It localises to the cell inner membrane. Required for the insertion and/or proper folding and/or complex formation of integral membrane proteins into the membrane. Involved in integration of membrane proteins that insert both dependently and independently of the Sec translocase complex, as well as at least some lipoproteins. Aids folding of multispanning membrane proteins. This is Membrane protein insertase YidC from Nitratidesulfovibrio vulgaris (strain ATCC 29579 / DSM 644 / CCUG 34227 / NCIMB 8303 / VKM B-1760 / Hildenborough) (Desulfovibrio vulgaris).